We begin with the raw amino-acid sequence, 312 residues long: Zinc transporter ZitB (312 aa).

The next 5 helical transmembrane spans lie at 21 to 41 (LLFA…GGIL), 48 to 68 (LADA…LLAV), 90 to 110 (AAFV…WEAI), 123 to 143 (LMMV…WILH), and 164 to 184 (LLGS…GWTP).

The protein belongs to the cation diffusion facilitator (CDF) transporter (TC 2.A.4) family. SLC30A subfamily.

Its subcellular location is the cell inner membrane. Its function is as follows. Involved in zinc efflux across the cytoplasmic membrane, thus reducing zinc accumulation in the cytoplasm and rendering bacteria more resistant to zinc. It may contribute to zinc homeostasis at low concentrations of zinc. The protein is Zinc transporter ZitB of Salmonella typhimurium (strain LT2 / SGSC1412 / ATCC 700720).